Reading from the N-terminus, the 155-residue chain is SsrA-binding protein (155 aa).

It belongs to the SmpB family.

Its subcellular location is the cytoplasm. Its function is as follows. Required for rescue of stalled ribosomes mediated by trans-translation. Binds to transfer-messenger RNA (tmRNA), required for stable association of tmRNA with ribosomes. tmRNA and SmpB together mimic tRNA shape, replacing the anticodon stem-loop with SmpB. tmRNA is encoded by the ssrA gene; the 2 termini fold to resemble tRNA(Ala) and it encodes a 'tag peptide', a short internal open reading frame. During trans-translation Ala-aminoacylated tmRNA acts like a tRNA, entering the A-site of stalled ribosomes, displacing the stalled mRNA. The ribosome then switches to translate the ORF on the tmRNA; the nascent peptide is terminated with the 'tag peptide' encoded by the tmRNA and targeted for degradation. The ribosome is freed to recommence translation, which seems to be the essential function of trans-translation. In Bacillus cereus (strain G9842), this protein is SsrA-binding protein.